We begin with the raw amino-acid sequence, 428 residues long: Tryptophan synthase beta chain (428 aa).

Lys-100 carries the post-translational modification N6-(pyridoxal phosphate)lysine.

This sequence belongs to the TrpB family. As to quaternary structure, tetramer of two alpha and two beta chains. Requires pyridoxal 5'-phosphate as cofactor.

It carries out the reaction (1S,2R)-1-C-(indol-3-yl)glycerol 3-phosphate + L-serine = D-glyceraldehyde 3-phosphate + L-tryptophan + H2O. It participates in amino-acid biosynthesis; L-tryptophan biosynthesis; L-tryptophan from chorismate: step 5/5. In terms of biological role, the beta subunit is responsible for the synthesis of L-tryptophan from indole and L-serine. This Streptomyces griseus subsp. griseus (strain JCM 4626 / CBS 651.72 / NBRC 13350 / KCC S-0626 / ISP 5235) protein is Tryptophan synthase beta chain.